A 398-amino-acid polypeptide reads, in one-letter code: Maltoporin (398 aa).

Residues 1–30 form the signal peptide; the sequence is MTDKNNKRLFKVAPLATAIAASLFTVNASA.

This sequence belongs to the porin LamB (TC 1.B.3) family. Homotrimer formed of three 18-stranded antiparallel beta-barrels, containing three independent channels.

The protein resides in the cell outer membrane. The enzyme catalyses beta-maltose(in) = beta-maltose(out). Involved in the transport of maltose and maltodextrins. The protein is Maltoporin of Hahella chejuensis (strain KCTC 2396).